We begin with the raw amino-acid sequence, 175 residues long: Sec-independent protein translocase protein TatB (175 aa).

A helical transmembrane segment spans residues 1-21 (MLDLGLSKMALIGVVALVVLG). 2 disordered regions span residues 96–115 (VSPG…AASG) and 153–175 (VQSG…ARFL). Over residues 160-175 (VARHRPASLRRPARFL) the composition is skewed to basic residues.

It belongs to the TatB family. As to quaternary structure, the Tat system comprises two distinct complexes: a TatABC complex, containing multiple copies of TatA, TatB and TatC subunits, and a separate TatA complex, containing only TatA subunits. Substrates initially bind to the TatABC complex, which probably triggers association of the separate TatA complex to form the active translocon.

It is found in the cell inner membrane. In terms of biological role, part of the twin-arginine translocation (Tat) system that transports large folded proteins containing a characteristic twin-arginine motif in their signal peptide across membranes. Together with TatC, TatB is part of a receptor directly interacting with Tat signal peptides. TatB may form an oligomeric binding site that transiently accommodates folded Tat precursor proteins before their translocation. The chain is Sec-independent protein translocase protein TatB from Burkholderia mallei (strain ATCC 23344).